Here is a 274-residue protein sequence, read N- to C-terminus: Eukaryotic translation initiation factor 3 subunit G (274 aa).

Phosphoserine is present on residues serine 146, serine 164, and serine 171. The segment at 149 to 170 (ANTSAAATPEPDTDASGKYVPP) is disordered. The 80-residue stretch at 191–270 (TTLKISQLNT…LILHLEWPKK (80 aa)) folds into the RRM domain.

It belongs to the eIF-3 subunit G family. In terms of assembly, component of the eukaryotic translation initiation factor 3 (eIF-3) complex.

Its subcellular location is the cytoplasm. In terms of biological role, RNA-binding component of the eukaryotic translation initiation factor 3 (eIF-3) complex, which is involved in protein synthesis of a specialized repertoire of mRNAs and, together with other initiation factors, stimulates binding of mRNA and methionyl-tRNAi to the 40S ribosome. The eIF-3 complex specifically targets and initiates translation of a subset of mRNAs involved in cell proliferation. This subunit can bind 18S rRNA. The sequence is that of Eukaryotic translation initiation factor 3 subunit G from Meyerozyma guilliermondii (strain ATCC 6260 / CBS 566 / DSM 6381 / JCM 1539 / NBRC 10279 / NRRL Y-324) (Yeast).